The chain runs to 357 residues: DNA replication and repair protein RecF (357 aa).

30 to 37 (GANGSGKT) serves as a coordination point for ATP.

Belongs to the RecF family.

Its subcellular location is the cytoplasm. Its function is as follows. The RecF protein is involved in DNA metabolism; it is required for DNA replication and normal SOS inducibility. RecF binds preferentially to single-stranded, linear DNA. It also seems to bind ATP. This is DNA replication and repair protein RecF from Salmonella paratyphi B (strain ATCC BAA-1250 / SPB7).